A 347-amino-acid chain; its full sequence is Sensor protein VraS (347 aa).

2 helical membrane-spanning segments follow: residues I13 to I33 and I43 to V63. One can recognise a Histidine kinase domain in the interval R150–K341. The residue at position 156 (H156) is a Phosphohistidine.

Post-translationally, autophosphorylated on His-156.

The protein localises to the cell membrane. The catalysed reaction is ATP + protein L-histidine = ADP + protein N-phospho-L-histidine.. Functionally, member of the two-component regulatory system PprA/PprB involved in biofilm formation by controlling the expression of many related genes including type IVb pili major subunit flp pilin, adhesin bapA or cupE fimbriae. Also modulates quorum-sensing signal production acting on both negative and positive modulators. Functions as a heme sensor histidine kinase which is autophosphorylated at a histidine residue and transfers its phosphate group to PprB. This is Sensor protein VraS (vraS) from Staphylococcus aureus (strain COL).